The following is a 451-amino-acid chain: Phosphoglucosamine mutase (451 aa).

Ser-102 serves as the catalytic Phosphoserine intermediate. Residues Ser-102, Asp-243, Asp-245, and Asp-247 each coordinate Mg(2+). A Phosphoserine modification is found at Ser-102.

It belongs to the phosphohexose mutase family. Mg(2+) serves as cofactor. Post-translationally, activated by phosphorylation.

The catalysed reaction is alpha-D-glucosamine 1-phosphate = D-glucosamine 6-phosphate. In terms of biological role, catalyzes the conversion of glucosamine-6-phosphate to glucosamine-1-phosphate. In Brucella canis (strain ATCC 23365 / NCTC 10854 / RM-666), this protein is Phosphoglucosamine mutase.